A 51-amino-acid chain; its full sequence is MSWLNFLKYIAKYGKKAVSAAWKYKGKVLEWLNVGPTLEWVWQKLKKIAGL.

Position 1 is an N-formylmethionine (Met-1).

The protein resides in the secreted. In terms of biological role, antibacterial peptide active against a broad range of lactic acid bacteria, L.monocytogenes and many epidemiologically unrelated strains of S.aureus involved in bovine mastitis. This Staphylococcus aureus protein is Bacteriocin aureocin A53 (aucA).